The following is a 362-amino-acid chain: 3-dehydroquinate synthase (362 aa).

NAD(+) contacts are provided by residues 71-76, 105-109, 129-130, lysine 142, lysine 151, and 169-172; these read DGEQYK, GVVGD, TT, and CLKT. 3 residues coordinate Zn(2+): glutamate 184, histidine 247, and histidine 264.

The protein belongs to the sugar phosphate cyclases superfamily. Dehydroquinate synthase family. Requires Co(2+) as cofactor. It depends on Zn(2+) as a cofactor. NAD(+) is required as a cofactor.

Its subcellular location is the cytoplasm. The catalysed reaction is 7-phospho-2-dehydro-3-deoxy-D-arabino-heptonate = 3-dehydroquinate + phosphate. It participates in metabolic intermediate biosynthesis; chorismate biosynthesis; chorismate from D-erythrose 4-phosphate and phosphoenolpyruvate: step 2/7. Its function is as follows. Catalyzes the conversion of 3-deoxy-D-arabino-heptulosonate 7-phosphate (DAHP) to dehydroquinate (DHQ). In Shigella boydii serotype 18 (strain CDC 3083-94 / BS512), this protein is 3-dehydroquinate synthase.